Reading from the N-terminus, the 543-residue chain is CTP synthase (543 aa).

The tract at residues 1–265 (MTRFIFVTGG…DQIVLDKFGL (265 aa)) is amidoligase domain. Serine 13 contacts CTP. Residue serine 13 participates in UTP binding. Residues 14 to 19 (SLGKGI) and aspartate 71 contribute to the ATP site. Positions 71 and 139 each coordinate Mg(2+). CTP is bound by residues 146–148 (DIE), 186–191 (KTKPTQ), and lysine 222. UTP is bound by residues 186–191 (KTKPTQ) and lysine 222. The region spanning 290-541 (TIAMVGKYMD…IQAAVEQNER (252 aa)) is the Glutamine amidotransferase type-1 domain. Glycine 351 provides a ligand contact to L-glutamine. Cysteine 378 serves as the catalytic Nucleophile; for glutamine hydrolysis. L-glutamine is bound by residues 379-382 (LGMQ), glutamate 402, and arginine 469. Residues histidine 514 and glutamate 516 contribute to the active site.

It belongs to the CTP synthase family. Homotetramer.

It carries out the reaction UTP + L-glutamine + ATP + H2O = CTP + L-glutamate + ADP + phosphate + 2 H(+). The catalysed reaction is L-glutamine + H2O = L-glutamate + NH4(+). It catalyses the reaction UTP + NH4(+) + ATP = CTP + ADP + phosphate + 2 H(+). The protein operates within pyrimidine metabolism; CTP biosynthesis via de novo pathway; CTP from UDP: step 2/2. With respect to regulation, allosterically activated by GTP, when glutamine is the substrate; GTP has no effect on the reaction when ammonia is the substrate. The allosteric effector GTP functions by stabilizing the protein conformation that binds the tetrahedral intermediate(s) formed during glutamine hydrolysis. Inhibited by the product CTP, via allosteric rather than competitive inhibition. In terms of biological role, catalyzes the ATP-dependent amination of UTP to CTP with either L-glutamine or ammonia as the source of nitrogen. Regulates intracellular CTP levels through interactions with the four ribonucleotide triphosphates. In Saccharophagus degradans (strain 2-40 / ATCC 43961 / DSM 17024), this protein is CTP synthase.